The chain runs to 302 residues: tRNA pseudouridine synthase B (302 aa).

The active-site Nucleophile is D45.

This sequence belongs to the pseudouridine synthase TruB family. Type 1 subfamily.

It catalyses the reaction uridine(55) in tRNA = pseudouridine(55) in tRNA. Functionally, responsible for synthesis of pseudouridine from uracil-55 in the psi GC loop of transfer RNAs. This chain is tRNA pseudouridine synthase B, found in Francisella tularensis subsp. tularensis (strain FSC 198).